A 780-amino-acid polypeptide reads, in one-letter code: Striatin (780 aa).

Positions 53-120 (LHFLQHEWAR…QERAKYHKLK (68 aa)) form a coiled coil. The caveolin-binding stretch occupies residues 55 to 63 (FLQHEWARF). The disordered stretch occupies residues 124-150 (ELNQGDMKPPSYDSDEGNETEVQPQQN). Residue Ser-137 is modified to Phosphoserine. Residues 149–166 (QNSQLMWKQGRQLLRQYL) form a calmodulin-binding region. At Thr-225 the chain carries Phosphothreonine. Phosphoserine occurs at positions 227, 229, 245, and 259. Disordered regions lie at residues 289–310 (DFLVTSEEGDNESRSAGDGTDW) and 365–387 (DELPSLQPSVGSPSRPSSSRLPE). Over residues 299–310 (NESRSAGDGTDW) the composition is skewed to basic and acidic residues. WD repeat units lie at residues 461 to 500 (SHFDGIRALAFHPIEPVLITASEDHTLKMWNLQKTAPAKK), 514 to 553 (AHKGPVLCVVMSSNGEQCYSGGTDGLIQGWNTTNPNIDPY), 567 to 606 (GHTDAVWGLAYSAAHQRLLSCSADGTLRLWNTTEVAPALS), 662 to 701 (NSSCQINRVISHPTLPISITAHEDRHIKFYDNNTGKLIHS), 704 to 743 (AHLEAVTSLAVDPNGLYLMSGSHDCSIRLWNLESKTCIQE), and 750 to 780 (KFEESIHDVAFHPSKCYIASAGADALAKVFV).

The protein belongs to the WD repeat striatin family. Part of the core of STRIPAK complexes composed of PP2A catalytic and scaffolding subunits, the striatins (PP2A regulatory subunits), the striatin-associated proteins MOB4, STRIP1 and STRIP2, PDCD10 and members of the STE20 kinases, such as STK24 and STK26. Interacts with CTTNBP2; this interaction may regulate dendritic spine distribution of STRN. Activation of glutamate receptors weakens the interaction with CTTNBP2. Preferentially expressed in brain.

It localises to the cytoplasm. The protein localises to the membrane. Its subcellular location is the cell projection. It is found in the dendritic spine. Its function is as follows. Calmodulin-binding scaffolding protein which is the center of the striatin-interacting phosphatase and kinase (STRIPAK) complexes. STRIPAK complexes have critical roles in protein (de)phosphorylation and are regulators of multiple signaling pathways including Hippo, MAPK, nuclear receptor and cytoskeleton remodeling. Different types of STRIPAK complexes are involved in a variety of biological processes such as cell growth, differentiation, apoptosis, metabolism and immune regulation. The sequence is that of Striatin (STRN) from Homo sapiens (Human).